We begin with the raw amino-acid sequence, 705 residues long: Phosphoribosylformylglycinamidine synthase subunit PurL (705 aa).

Residue histidine 32 is part of the active site. Position 35 (tyrosine 35) interacts with ATP. Residue glutamate 76 participates in Mg(2+) binding. Residues 77 to 80 and arginine 99 contribute to the substrate site; that span reads SHNH. Histidine 78 functions as the Proton acceptor in the catalytic mechanism. Aspartate 100 serves as a coordination point for Mg(2+). A substrate-binding site is contributed by glutamine 224. Aspartate 252 lines the Mg(2+) pocket. 296 to 298 provides a ligand contact to substrate; it reads ESQ. Residues aspartate 471 and glycine 508 each contribute to the ATP site. Mg(2+) is bound at residue asparagine 509. Residue serine 511 participates in substrate binding.

The protein belongs to the FGAMS family. As to quaternary structure, monomer. Part of the FGAM synthase complex composed of 1 PurL, 1 PurQ and 2 PurS subunits.

The protein resides in the cytoplasm. It catalyses the reaction N(2)-formyl-N(1)-(5-phospho-beta-D-ribosyl)glycinamide + L-glutamine + ATP + H2O = 2-formamido-N(1)-(5-O-phospho-beta-D-ribosyl)acetamidine + L-glutamate + ADP + phosphate + H(+). Its pathway is purine metabolism; IMP biosynthesis via de novo pathway; 5-amino-1-(5-phospho-D-ribosyl)imidazole from N(2)-formyl-N(1)-(5-phospho-D-ribosyl)glycinamide: step 1/2. Its function is as follows. Part of the phosphoribosylformylglycinamidine synthase complex involved in the purines biosynthetic pathway. Catalyzes the ATP-dependent conversion of formylglycinamide ribonucleotide (FGAR) and glutamine to yield formylglycinamidine ribonucleotide (FGAM) and glutamate. The FGAM synthase complex is composed of three subunits. PurQ produces an ammonia molecule by converting glutamine to glutamate. PurL transfers the ammonia molecule to FGAR to form FGAM in an ATP-dependent manner. PurS interacts with PurQ and PurL and is thought to assist in the transfer of the ammonia molecule from PurQ to PurL. This is Phosphoribosylformylglycinamidine synthase subunit PurL from Pyrococcus abyssi (strain GE5 / Orsay).